Consider the following 160-residue polypeptide: SsrA-binding protein (160 aa).

It belongs to the SmpB family.

The protein resides in the cytoplasm. Functionally, required for rescue of stalled ribosomes mediated by trans-translation. Binds to transfer-messenger RNA (tmRNA), required for stable association of tmRNA with ribosomes. tmRNA and SmpB together mimic tRNA shape, replacing the anticodon stem-loop with SmpB. tmRNA is encoded by the ssrA gene; the 2 termini fold to resemble tRNA(Ala) and it encodes a 'tag peptide', a short internal open reading frame. During trans-translation Ala-aminoacylated tmRNA acts like a tRNA, entering the A-site of stalled ribosomes, displacing the stalled mRNA. The ribosome then switches to translate the ORF on the tmRNA; the nascent peptide is terminated with the 'tag peptide' encoded by the tmRNA and targeted for degradation. The ribosome is freed to recommence translation, which seems to be the essential function of trans-translation. This Mycobacterium bovis (strain ATCC BAA-935 / AF2122/97) protein is SsrA-binding protein.